A 119-amino-acid chain; its full sequence is Chymotrypsin inhibitor WCI (119 aa).

5 disulfide bridges follow: Cys-6/Cys-55, Cys-20/Cys-44, Cys-29/Cys-87, Cys-45/Cys-105, and Cys-57/Cys-116.

The protein resides in the secreted. In terms of biological role, inhibits bovine, insect and wheat chymotrypsins. Inhibits bovine chymotrypsin with Ki of 0.6 nM. Does not inhibit human or wheat alpha-amylases, bovine pancreatic trypsin, or trypsin-like activity isolated from wheat. The chain is Chymotrypsin inhibitor WCI from Triticum aestivum (Wheat).